Consider the following 186-residue polypeptide: MGLDKVVKDIMDKAEADSRDITAKAAAEAAEIKKSAEAEAKQIIAAENARAEQAISKMRQRELSSAKLDVKKAKLNSEKDVLAETHEAFVRQLSTLPREKKADLLQKLVKLAKKDIPQGKIFTNAADADLVKDSGYEYGGNVKCIGGIVVTSVDGSVNLDYTFDSILEDVWTSSMKPVSDILFGSR.

The protein belongs to the V-ATPase E subunit family. In terms of assembly, has multiple subunits with at least A(3), B(3), C, D, E, F, H, I and proteolipid K(x).

Its subcellular location is the cell membrane. Functionally, component of the A-type ATP synthase that produces ATP from ADP in the presence of a proton gradient across the membrane. This Methanocella arvoryzae (strain DSM 22066 / NBRC 105507 / MRE50) protein is A-type ATP synthase subunit E.